A 353-amino-acid chain; its full sequence is Inactive ADP-ribosyltransferase ARH2 (353 aa).

Serine 27 bears the Phosphoserine mark.

It belongs to the ADP-ribosylglycohydrolase family.

Its subcellular location is the cytoplasm. The protein localises to the myofibril. The protein resides in the sarcomere. In terms of biological role, required for myofibril assembly and outgrowth of the cardiac chambers in the developing heart. Appears to be catalytically inactive, showing no activity against O-acetyl-ADP-ribose. The chain is Inactive ADP-ribosyltransferase ARH2 (Adprhl1) from Rattus norvegicus (Rat).